The primary structure comprises 212 residues: Glutathione S-transferase (212 aa).

Residues 1 to 82 (MGMKLHGPAM…YIAHTYADKG (82 aa)) form the GST N-terminal domain. Glutathione contacts are provided by residues Ser-11, 12-13 (PA), 40-41 (HK), 53-54 (QV), and 66-67 (ES). One can recognise a GST C-terminal domain in the interval 89 to 212 (DPKKMAIMSV…AWSKAIEYKQ (124 aa)).

It belongs to the GST superfamily. Phi family.

The enzyme catalyses RX + glutathione = an S-substituted glutathione + a halide anion + H(+). Conjugation of reduced glutathione to a wide number of exogenous and endogenous hydrophobic electrophiles. In Hyoscyamus muticus (Egyptian henbane), this protein is Glutathione S-transferase.